The primary structure comprises 625 residues: DNA mismatch repair protein MutL (625 aa).

The protein belongs to the DNA mismatch repair MutL/HexB family.

Its function is as follows. This protein is involved in the repair of mismatches in DNA. It is required for dam-dependent methyl-directed DNA mismatch repair. May act as a 'molecular matchmaker', a protein that promotes the formation of a stable complex between two or more DNA-binding proteins in an ATP-dependent manner without itself being part of a final effector complex. In Azorhizobium caulinodans (strain ATCC 43989 / DSM 5975 / JCM 20966 / LMG 6465 / NBRC 14845 / NCIMB 13405 / ORS 571), this protein is DNA mismatch repair protein MutL.